The following is a 536-amino-acid chain: Light-independent protochlorophyllide reductase subunit B (536 aa).

Asp-36 contributes to the [4Fe-4S] cluster binding site. Asp-292 serves as the catalytic Proton donor. Substrate is bound at residue 427 to 428; that stretch reads GL. The tract at residues 447–489 is disordered; the sequence is QSHLGHLGGHQSQTEQQQSQAATNPSTQSNTDSSSEESPLWTP. The segment covering 448-469 has biased composition (low complexity); that stretch reads SHLGHLGGHQSQTEQQQSQAAT. A compositionally biased stretch (polar residues) spans 470 to 483; it reads NPSTQSNTDSSSEE.

The protein belongs to the ChlB/BchB/BchZ family. In terms of assembly, protochlorophyllide reductase is composed of three subunits; ChlL, ChlN and ChlB. Forms a heterotetramer of two ChlB and two ChlN subunits. [4Fe-4S] cluster is required as a cofactor.

It catalyses the reaction chlorophyllide a + oxidized 2[4Fe-4S]-[ferredoxin] + 2 ADP + 2 phosphate = protochlorophyllide a + reduced 2[4Fe-4S]-[ferredoxin] + 2 ATP + 2 H2O. Its pathway is porphyrin-containing compound metabolism; chlorophyll biosynthesis (light-independent). Functionally, component of the dark-operative protochlorophyllide reductase (DPOR) that uses Mg-ATP and reduced ferredoxin to reduce ring D of protochlorophyllide (Pchlide) to form chlorophyllide a (Chlide). This reaction is light-independent. The NB-protein (ChlN-ChlB) is the catalytic component of the complex. The chain is Light-independent protochlorophyllide reductase subunit B from Prochlorococcus marinus (strain MIT 9303).